A 315-amino-acid polypeptide reads, in one-letter code: Ribonuclease Z (315 aa).

Positions 62, 64, 66, 67, 144, 215, and 273 each coordinate Zn(2+). The active-site Proton acceptor is the Asp-66.

The protein belongs to the RNase Z family. In terms of assembly, homodimer. Zn(2+) serves as cofactor.

It catalyses the reaction Endonucleolytic cleavage of RNA, removing extra 3' nucleotides from tRNA precursor, generating 3' termini of tRNAs. A 3'-hydroxy group is left at the tRNA terminus and a 5'-phosphoryl group is left at the trailer molecule.. Zinc phosphodiesterase, which displays some tRNA 3'-processing endonuclease activity. Probably involved in tRNA maturation, by removing a 3'-trailer from precursor tRNA. The sequence is that of Ribonuclease Z from Synechococcus sp. (strain CC9311).